The primary structure comprises 186 residues: ATP synthase subunit delta (186 aa).

This sequence belongs to the ATPase delta chain family. As to quaternary structure, F-type ATPases have 2 components, F(1) - the catalytic core - and F(0) - the membrane proton channel. F(1) has five subunits: alpha(3), beta(3), gamma(1), delta(1), epsilon(1). F(0) has three main subunits: a(1), b(2) and c(10-14). The alpha and beta chains form an alternating ring which encloses part of the gamma chain. F(1) is attached to F(0) by a central stalk formed by the gamma and epsilon chains, while a peripheral stalk is formed by the delta and b chains.

It is found in the cell inner membrane. Its function is as follows. F(1)F(0) ATP synthase produces ATP from ADP in the presence of a proton or sodium gradient. F-type ATPases consist of two structural domains, F(1) containing the extramembraneous catalytic core and F(0) containing the membrane proton channel, linked together by a central stalk and a peripheral stalk. During catalysis, ATP synthesis in the catalytic domain of F(1) is coupled via a rotary mechanism of the central stalk subunits to proton translocation. Functionally, this protein is part of the stalk that links CF(0) to CF(1). It either transmits conformational changes from CF(0) to CF(1) or is implicated in proton conduction. The polypeptide is ATP synthase subunit delta (Fuscovulum blasticum (Rhodobacter blasticus)).